A 628-amino-acid polypeptide reads, in one-letter code: Probable potassium transport system protein Kup (628 aa).

Transmembrane regions (helical) follow at residues 15-35 (FAAE…SPLY), 49-69 (FLGG…ILSV), 106-126 (WYLL…GVLT), 141-161 (ISPE…LAVF), 174-194 (FFGP…VYGI), 210-230 (IMLM…CFLA), 254-274 (LFVA…ILLV), 295-315 (LLFL…TGVF), 343-363 (IYVG…VLGF), 369-389 (LASA…ILFI), 398-418 (WPAP…FAFA), and 425-445 (IHDG…VMVS).

This sequence belongs to the HAK/KUP transporter (TC 2.A.72) family.

The protein localises to the cell inner membrane. It carries out the reaction K(+)(in) + H(+)(in) = K(+)(out) + H(+)(out). In terms of biological role, transport of potassium into the cell. Likely operates as a K(+):H(+) symporter. In Xanthobacter autotrophicus (strain ATCC BAA-1158 / Py2), this protein is Probable potassium transport system protein Kup.